We begin with the raw amino-acid sequence, 530 residues long: Per os infectivity factor 1 (530 aa).

An N-terminal signal peptide occupies residues 1–15 (MHFAIILLFLLVIIA).

In terms of assembly, forms the PIF complex together with PIF2 and PIF3. The complex also interacts with per os infectivity factor PIF0.

Its subcellular location is the virion membrane. Functionally, per os infectivity factor that mediates the specific binding of occluded virions (ODV) to the host midgut target cells. This Autographa californica nuclear polyhedrosis virus (AcMNPV) protein is Per os infectivity factor 1.